A 405-amino-acid chain; its full sequence is Glyceraldehyde-3-phosphate dehydrogenase A, chloroplastic (405 aa).

A chloroplast-targeting transit peptide spans 1–68 (MASATFSVAK…GHKKSLVVEA (68 aa)). Residues 80-81 (RI), aspartate 104, and arginine 149 each bind NADP(+). D-glyceraldehyde 3-phosphate is bound by residues 221 to 223 (SCT), threonine 252, arginine 267, 280 to 281 (TG), and arginine 303. Catalysis depends on cysteine 222, which acts as the Nucleophile. Asparagine 385 contributes to the NADP(+) binding site.

The protein belongs to the glyceraldehyde-3-phosphate dehydrogenase family. Tetramer of either four A chains (GAPDH 2) or two A and two B chains (GAPDH 1).

Its subcellular location is the plastid. It localises to the chloroplast. It carries out the reaction D-glyceraldehyde 3-phosphate + phosphate + NADP(+) = (2R)-3-phospho-glyceroyl phosphate + NADPH + H(+). It functions in the pathway carbohydrate biosynthesis; Calvin cycle. The chain is Glyceraldehyde-3-phosphate dehydrogenase A, chloroplastic (GAPA) from Pisum sativum (Garden pea).